The chain runs to 288 residues: MALFRKKDKYIRITPNNSLKGSVSHNVPEVPDELFAKCPACKHMIYKKDLGLAKICPTCSYNFRISAQERLTLTVDEGSFQELFTSIETKDPLRFPGYQEKLQKAKETTGLHEAVLTGKAMVKGQQIALAIMDSHFIMASMGTVVGEKITRLFELAIEENLPVVIFTASGGARMQEGIMSLMQMAKVSAAVKRHSNAGLFYLTILTDPTTGGVTASFAMEGDIILAEPQSLVGFAGRRVIETTVRENLPDDFQKAEFLQDHGFVDAIVKRTELRDKIAHLVAFHGGGQ.

A CoA carboxyltransferase N-terminal domain is found at 34–288 (LFAKCPACKH…HLVAFHGGGQ (255 aa)). Positions 38, 41, 56, and 59 each coordinate Zn(2+). The segment at 38–59 (CPACKHMIYKKDLGLAKICPTC) adopts a C4-type zinc-finger fold.

Belongs to the AccD/PCCB family. As to quaternary structure, acetyl-CoA carboxylase is a heterohexamer composed of biotin carboxyl carrier protein (AccB), biotin carboxylase (AccC) and two subunits each of ACCase subunit alpha (AccA) and ACCase subunit beta (AccD). Zn(2+) is required as a cofactor.

The protein resides in the cytoplasm. It catalyses the reaction N(6)-carboxybiotinyl-L-lysyl-[protein] + acetyl-CoA = N(6)-biotinyl-L-lysyl-[protein] + malonyl-CoA. The protein operates within lipid metabolism; malonyl-CoA biosynthesis; malonyl-CoA from acetyl-CoA: step 1/1. Its function is as follows. Component of the acetyl coenzyme A carboxylase (ACC) complex. Biotin carboxylase (BC) catalyzes the carboxylation of biotin on its carrier protein (BCCP) and then the CO(2) group is transferred by the transcarboxylase to acetyl-CoA to form malonyl-CoA. The polypeptide is Acetyl-coenzyme A carboxylase carboxyl transferase subunit beta (Streptococcus pyogenes serotype M4 (strain MGAS10750)).